Here is a 119-residue protein sequence, read N- to C-terminus: MDTLCYTLLLLTTPSWVLSQVTLKESGPVLVKPTETLTLTCTVSGFSLSNARMGVSWIRQPPGKALEWLAHIFSNDEKSYSTSLKSRLTISKDTSKSQVVLTMTNMDPVDTATYYCARI.

The signal sequence occupies residues 1–19; that stretch reads MDTLCYTLLLLTTPSWVLS. Glutamine 20 carries the pyrrolidone carboxylic acid modification. Residues 20–44 form a framework-1 region; that stretch reads QVTLKESGPVLVKPTETLTLTCTVS. An Ig-like domain is found at 20–119; that stretch reads QVTLKESGPV…DTATYYCARI (100 aa). Cysteine 41 and cysteine 116 form a disulfide bridge. The tract at residues 45-54 is complementarity-determining-1; it reads GFSLSNARMG. The interval 55-71 is framework-2; sequence VSWIRQPPGKALEWLAH. The segment at 72 to 78 is complementarity-determining-2; sequence IFSNDEK. A framework-3 region spans residues 79–116; that stretch reads SYSTSLKSRLTISKDTSKSQVVLTMTNMDPVDTATYYC. The tract at residues 117 to 119 is complementarity-determining-3; the sequence is ARI.

As to quaternary structure, immunoglobulins are composed of two identical heavy chains and two identical light chains; disulfide-linked.

The protein localises to the secreted. It is found in the cell membrane. Functionally, v region of the variable domain of immunoglobulin heavy chains that participates in the antigen recognition. Immunoglobulins, also known as antibodies, are membrane-bound or secreted glycoproteins produced by B lymphocytes. In the recognition phase of humoral immunity, the membrane-bound immunoglobulins serve as receptors which, upon binding of a specific antigen, trigger the clonal expansion and differentiation of B lymphocytes into immunoglobulins-secreting plasma cells. Secreted immunoglobulins mediate the effector phase of humoral immunity, which results in the elimination of bound antigens. The antigen binding site is formed by the variable domain of one heavy chain, together with that of its associated light chain. Thus, each immunoglobulin has two antigen binding sites with remarkable affinity for a particular antigen. The variable domains are assembled by a process called V-(D)-J rearrangement and can then be subjected to somatic hypermutations which, after exposure to antigen and selection, allow affinity maturation for a particular antigen. The sequence is that of Immunoglobulin heavy variable 2-26 from Homo sapiens (Human).